The sequence spans 284 residues: MADTEPSPLFVFSTIAIIISTFVIFYFVQQSKKNTPVLKPDTFQKFPLIEKTRVSHNSSVYRFGLPKSTDRLGLPIGQHISIGATIGGKEVVRSYTPISTDDELGYFDLLIKTYENGNISKHVDSKKVGEYVEIRGPKGFFTYTPNMVKSFGMIAGGTGIAPMYQIITAILRNPADKTKISLIYANVTESDILLKSELDKWAEEHPDNFSVHYVLNEAPENWKGSVGFVTPEIIDSKLPKASDDSNLLLCGPPPMISAMKKAAVGLGFAKAKPVSKLGDQVFVF.

The chain crosses the membrane as a helical span at residues 8-28 (PLFVFSTIAIIISTFVIFYFV). In terms of domain architecture, FAD-binding FR-type spans 41–144 (DTFQKFPLIE…RGPKGFFTYT (104 aa)). FAD is bound by residues 124–139 (DSKK…GPKG) and 150–182 (SFGM…KISL).

It belongs to the flavoprotein pyridine nucleotide cytochrome reductase family. Monomer. Component of the 2-(3-amino-3-carboxypropyl)histidine synthase complex composed of DPH1, DPH2, DPH3 and a NADH-dependent reductase, predominantly CBR1. It depends on FAD as a cofactor.

It localises to the mitochondrion outer membrane. It carries out the reaction 2 Fe(III)-[cytochrome b5] + NADH = 2 Fe(II)-[cytochrome b5] + NAD(+) + H(+). It catalyses the reaction 2 Fe(3+)-[Dph3] + NADH = 2 Fe(2+)-[Dph3] + NAD(+) + H(+). The protein operates within protein modification; peptidyl-diphthamide biosynthesis. NADH-dependent reductase for DPH3 and cytochrome b5. Required for the first step of diphthamide biosynthesis, a post-translational modification of histidine which occurs in elongation factor 2. DPH1 and DPH2 transfer a 3-amino-3-carboxypropyl (ACP) group from S-adenosyl-L-methionine (SAM) to a histidine residue, the reaction is assisted by a reduction system comprising DPH3 and a NADH-dependent reductase, predominantly CBR1. By reducing DPH3, also involved in the formation of the tRNA wobble base modification mcm5s 2U (5-methoxycarbonylmethyl-2-thiouridine), mediated by the elongator complex. The cytochrome b5/NADH cytochrome b5 reductase electron transfer system supports the catalytic activity of several sterol biosynthetic enzymes. The polypeptide is NADH-cytochrome b5 reductase 1 (CBR1) (Scheffersomyces stipitis (strain ATCC 58785 / CBS 6054 / NBRC 10063 / NRRL Y-11545) (Yeast)).